A 1033-amino-acid polypeptide reads, in one-letter code: PDZ domain-containing protein 7 (1033 aa).

PDZ domains are found at residues 86-168 and 210-293; these read SVRV…RMGR and IVHL…ETGR. Residues 323-344 are compositionally biased toward low complexity; it reads ESSSSVSSCASSAPYSSGSLPS. Disordered regions lie at residues 323 to 380, 444 to 464, 754 to 864, and 943 to 1033; these read ESSS…GGRV, KQQR…LQRS, EPLS…KTVT, and MELV…PRIP. Over residues 770–784 the composition is skewed to basic residues; it reads AQSRSRSRSRSRSRS. The segment covering 785–797 has biased composition (low complexity); the sequence is SRGQGKSPGRRSP. Residues 862–934 enclose the PDZ 3 domain; sequence TVTLSKMKQS…QRAVDTIRRA (73 aa). Pro residues predominate over residues 991–1000; it reads PEPPTNPQTP.

In terms of assembly, homodimerizes (via PDZ2 domain). Component of USH2 complex, composed of ADGRV1, PDZD7, USH2A and WHRN. Interacts (via PDZ domains) with WHRN; the interaction is direct. Interacts with USH1G. Interacts with ADGRV1 (via the cytoplasmic region). Interacts with USH2A (via the cytoplasmic region). Interacts with MYO7A (via MyTH4-FERM domains). As to expression, weakly expressed in the inner ear. Expressed in the retinal pigment epithelium.

It is found in the cell projection. The protein resides in the cilium. The protein localises to the nucleus. It localises to the stereocilium. In terms of biological role, in cochlear developing hair cells, essential in organizing the USH2 complex at stereocilia ankle links. Blocks inhibition of adenylate cyclase activity mediated by ADGRV1. The polypeptide is PDZ domain-containing protein 7 (Homo sapiens (Human)).